Consider the following 122-residue polypeptide: Large ribosomal subunit protein uL18 (122 aa).

The segment covering 1 to 21 (MSKLSRKQQTQKRHRRLRRHI) has biased composition (basic residues). The disordered stretch occupies residues 1–25 (MSKLSRKQQTQKRHRRLRRHITGTS).

It belongs to the universal ribosomal protein uL18 family. In terms of assembly, part of the 50S ribosomal subunit; part of the 5S rRNA/L5/L18/L25 subcomplex. Contacts the 5S and 23S rRNAs.

This is one of the proteins that bind and probably mediate the attachment of the 5S RNA into the large ribosomal subunit, where it forms part of the central protuberance. The chain is Large ribosomal subunit protein uL18 from Synechococcus sp. (strain CC9902).